Consider the following 456-residue polypeptide: tRNA modification GTPase MnmE (456 aa).

3 residues coordinate (6S)-5-formyl-5,6,7,8-tetrahydrofolate: Arg-24, Glu-81, and Lys-120. One can recognise a TrmE-type G domain in the interval 216-379 (GMTVVIAGRP…LREHLKACMG (164 aa)). Asn-226 provides a ligand contact to K(+). Residues 226 to 231 (NAGKSS), 245 to 251 (TEIAGTT), 270 to 273 (DTAG), 335 to 338 (NKAD), and 359 to 361 (SAR) contribute to the GTP site. Ser-230 contacts Mg(2+). Residues Thr-245, Ile-247, and Thr-250 each coordinate K(+). Mg(2+) is bound at residue Thr-251. Position 456 (Lys-456) interacts with (6S)-5-formyl-5,6,7,8-tetrahydrofolate.

The protein belongs to the TRAFAC class TrmE-Era-EngA-EngB-Septin-like GTPase superfamily. TrmE GTPase family. As to quaternary structure, homodimer. Heterotetramer of two MnmE and two MnmG subunits. K(+) is required as a cofactor.

The protein resides in the cytoplasm. Its function is as follows. Exhibits a very high intrinsic GTPase hydrolysis rate. Involved in the addition of a carboxymethylaminomethyl (cmnm) group at the wobble position (U34) of certain tRNAs, forming tRNA-cmnm(5)s(2)U34. This Pseudomonas savastanoi pv. phaseolicola (strain 1448A / Race 6) (Pseudomonas syringae pv. phaseolicola (strain 1448A / Race 6)) protein is tRNA modification GTPase MnmE.